Reading from the N-terminus, the 369-residue chain is MLTSQKVSRVLLHSSFLKTPVSTQSRSFVFTTIATTLFGSVLWSKNNVLASKMENHELHYNDPNDKYRKLLEKKRGPAFTRAAAEYPGQVRLYNYEKFLMFLGSSIGSFFHPEENKYIVALGESTAIEPVLKRLQHAMLSDPTGRQILRERPRITSTSLDLDYLRSLPDNTIGKSYITWLDREGVSPDTRVPVRYIDNEELAYIFQRYRECHDFYHAITGLPIIIEGEISVKVLEYMNIGIPMSGLGALFAPLRLKPSQRKRLREIYYPWAIKNGLYSKPLINVYWEKILDKDINEFRREMGIEQPPDLRDLRKEYFAKKRREKELKAAAAAATVTQRQRQQQRATATAANATSASSANVKPSNTAGAM.

The N-terminal 35 residues, 1–35, are a transit peptide targeting the mitochondrion; that stretch reads MLTSQKVSRVLLHSSFLKTPVSTQSRSFVFTTIAT. Residues His212, Asp213, His216, and Glu228 each coordinate Zn(2+). Residues 329–360 show a composition bias toward low complexity; sequence AAAAATVTQRQRQQQRATATAANATSASSANV. Residues 329 to 369 are disordered; the sequence is AAAAATVTQRQRQQQRATATAANATSASSANVKPSNTAGAM.

This sequence belongs to the COQ4 family. As to quaternary structure, component of a multi-subunit COQ enzyme complex, composed of at least COQ3, COQ4, COQ5, COQ6, COQ7 and COQ9. It depends on Zn(2+) as a cofactor.

It is found in the mitochondrion inner membrane. The enzyme catalyses a 4-hydroxy-3-methoxy-5-(all-trans-polyprenyl)benzoate + H(+) = a 2-methoxy-6-(all-trans-polyprenyl)phenol + CO2. It functions in the pathway cofactor biosynthesis; ubiquinone biosynthesis. Lyase that catalyzes the C1-decarboxylation of 4-hydroxy-3-methoxy-5-(all-trans-polyprenyl)benzoic acid into 2-methoxy-6-(all-trans-polyprenyl)phenol during ubiquinone biosynthesis. The polypeptide is Ubiquinone biosynthesis protein COQ4, mitochondrial (Lodderomyces elongisporus (strain ATCC 11503 / CBS 2605 / JCM 1781 / NBRC 1676 / NRRL YB-4239) (Yeast)).